Consider the following 84-residue polypeptide: Cell division topological specificity factor (84 aa).

Belongs to the MinE family.

Its function is as follows. Prevents the cell division inhibition by proteins MinC and MinD at internal division sites while permitting inhibition at polar sites. This ensures cell division at the proper site by restricting the formation of a division septum at the midpoint of the long axis of the cell. This Burkholderia mallei (strain NCTC 10247) protein is Cell division topological specificity factor.